Here is a 118-residue protein sequence, read N- to C-terminus: Small ribosomal subunit protein uS13 (118 aa).

The segment at 94 to 118 (GLPVRGQRTKTNARTRKGPRKPIKK) is disordered.

The protein belongs to the universal ribosomal protein uS13 family. As to quaternary structure, part of the 30S ribosomal subunit. Forms a loose heterodimer with protein S19. Forms two bridges to the 50S subunit in the 70S ribosome.

Its function is as follows. Located at the top of the head of the 30S subunit, it contacts several helices of the 16S rRNA. In the 70S ribosome it contacts the 23S rRNA (bridge B1a) and protein L5 of the 50S subunit (bridge B1b), connecting the 2 subunits; these bridges are implicated in subunit movement. Contacts the tRNAs in the A and P-sites. In Haemophilus ducreyi (strain 35000HP / ATCC 700724), this protein is Small ribosomal subunit protein uS13.